Reading from the N-terminus, the 141-residue chain is MPSQPSRELERFSNPHPERDYVVHMDLPEFTCLCPLTGQPDFAHFMLDFIPDQHNVELKSLKLYLWSFRDEGAFHEAMTNRIADDLIGLINPRYLRLLGRWYVRGGITTDVLIEHRQPGWQNPDILGQLPTVRWAQHQPGH.

Residue cysteine 34 is the Thioimide intermediate of the active site. Aspartate 41 acts as the Proton donor in catalysis. Substrate-binding positions include 56 to 58 and 75 to 76; these read VEL and HE.

It belongs to the GTP cyclohydrolase I family. QueF type 1 subfamily.

The protein resides in the cytoplasm. It catalyses the reaction 7-aminomethyl-7-carbaguanine + 2 NADP(+) = 7-cyano-7-deazaguanine + 2 NADPH + 3 H(+). It participates in tRNA modification; tRNA-queuosine biosynthesis. Functionally, catalyzes the NADPH-dependent reduction of 7-cyano-7-deazaguanine (preQ0) to 7-aminomethyl-7-deazaguanine (preQ1). The polypeptide is NADPH-dependent 7-cyano-7-deazaguanine reductase (Acidithiobacillus ferrooxidans (strain ATCC 23270 / DSM 14882 / CIP 104768 / NCIMB 8455) (Ferrobacillus ferrooxidans (strain ATCC 23270))).